We begin with the raw amino-acid sequence, 160 residues long: 2-C-methyl-D-erythritol 2,4-cyclodiphosphate synthase (160 aa).

Asp9 and His11 together coordinate a divalent metal cation. 4-CDP-2-C-methyl-D-erythritol 2-phosphate-binding positions include 9-11 (DVH) and 35-36 (HS). A divalent metal cation is bound at residue His43. Residues 57 to 59 (DIG), 62 to 66 (FPDTD), 101 to 107 (AQKPKMA), 133 to 136 (TTTE), Phe140, and Arg143 contribute to the 4-CDP-2-C-methyl-D-erythritol 2-phosphate site.

The protein belongs to the IspF family. In terms of assembly, homotrimer. A divalent metal cation is required as a cofactor.

The enzyme catalyses 4-CDP-2-C-methyl-D-erythritol 2-phosphate = 2-C-methyl-D-erythritol 2,4-cyclic diphosphate + CMP. It participates in isoprenoid biosynthesis; isopentenyl diphosphate biosynthesis via DXP pathway; isopentenyl diphosphate from 1-deoxy-D-xylulose 5-phosphate: step 4/6. Involved in the biosynthesis of isopentenyl diphosphate (IPP) and dimethylallyl diphosphate (DMAPP), two major building blocks of isoprenoid compounds. Catalyzes the conversion of 4-diphosphocytidyl-2-C-methyl-D-erythritol 2-phosphate (CDP-ME2P) to 2-C-methyl-D-erythritol 2,4-cyclodiphosphate (ME-CPP) with a corresponding release of cytidine 5-monophosphate (CMP). This Geobacillus thermodenitrificans (strain NG80-2) protein is 2-C-methyl-D-erythritol 2,4-cyclodiphosphate synthase.